We begin with the raw amino-acid sequence, 329 residues long: NADH-quinone oxidoreductase subunit H (329 aa).

9 consecutive transmembrane segments (helical) span residues 9–29 (LIKI…ATYI), 42–62 (GPSY…IKLF), 75–95 (LIFT…MAPI), 117–137 (IGFL…ILAG), 154–174 (IQLL…LMVV), 188–208 (GGFL…FLIA), 238–258 (LKWG…SFVI), 269–291 (WGFI…LSMW), and 309–329 (WKIM…IILI).

Belongs to the complex I subunit 1 family. NDH-1 is composed of 14 different subunits. Subunits NuoA, H, J, K, L, M, N constitute the membrane sector of the complex.

It is found in the cell inner membrane. It carries out the reaction a quinone + NADH + 5 H(+)(in) = a quinol + NAD(+) + 4 H(+)(out). In terms of biological role, NDH-1 shuttles electrons from NADH, via FMN and iron-sulfur (Fe-S) centers, to quinones in the respiratory chain. The immediate electron acceptor for the enzyme in this species is believed to be ubiquinone. Couples the redox reaction to proton translocation (for every two electrons transferred, four hydrogen ions are translocated across the cytoplasmic membrane), and thus conserves the redox energy in a proton gradient. This subunit may bind ubiquinone. This chain is NADH-quinone oxidoreductase subunit H, found in Helicobacter acinonychis (strain Sheeba).